The sequence spans 88 residues: Small ribosomal subunit protein bS20 (88 aa).

Positions 1–27 are disordered; sequence MANSKSAKKRALQSEKRRQHNASRRSM.

It belongs to the bacterial ribosomal protein bS20 family.

In terms of biological role, binds directly to 16S ribosomal RNA. The sequence is that of Small ribosomal subunit protein bS20 from Shewanella putrefaciens (strain CN-32 / ATCC BAA-453).